The primary structure comprises 317 residues: Taste receptor type 2 member 14 (317 aa).

The Extracellular portion of the chain corresponds to 1–7 (MGGVIKS). The chain crosses the membrane as a helical span at residues 8 to 28 (IFTFVLIVEFIIGNLGNSFIA). Residues 29-55 (LVNCIDWVKGRKISSVDRILTALAISK) lie on the Cytoplasmic side of the membrane. The helical transmembrane segment at 56–76 (ISLVWLIFGSWCVSVFFPALF) threads the bilayer. Residues 77–87 (ATEKMFRMLTN) lie on the Extracellular side of the membrane. 2 residues coordinate cholesterol: Thr-86 and Trp-89. Residues 88-108 (IWTVINHFSVWLATGLGTFYF) form a helical membrane-spanning segment. Residues 109–129 (LKIANFSNSIFLYLKWRVKKV) lie on the Cytoplasmic side of the membrane. The chain crosses the membrane as a helical span at residues 130 to 150 (VLVLLLVTSVFLFLNIALINI). Topologically, residues 151 to 184 (HINASINGYRRNKTCSSDSSNFTRFSSLIVLTST) are extracellular. N-linked (GlcNAc...) asparagine glycans are attached at residues Asn-153, Asn-162, and Asn-171. Val-180 contributes to the cholesterol binding site. A helical membrane pass occupies residues 185-205 (VFIFIPFTLSLAMFLLLIFSX). Topologically, residues 206–232 (WKHRKKMQHTVKRSGDASTKAHRGVKS) are cytoplasmic. Residues 233-253 (VXTFFLLYAIFCLSFFISVWT) form a helical membrane-spanning segment. The Extracellular portion of the chain corresponds to 254 to 261 (SERLEENL). Residues 262–282 (IILSQVMGMAYPSCHSCVLIL) traverse the membrane as a helical segment. Positions 265 and 268 each coordinate cholesterol. The Cytoplasmic portion of the chain corresponds to 283 to 317 (GNKKLRQASLSVLLWLRYMFKDGEPSGHKEFRESS).

Belongs to the G-protein coupled receptor T2R family. In terms of assembly, core component of the TAS2R14-GNAI1 complex, consisting of TAS2R14, GNAI1, GNB1 and GNG2; within the complex interacts with GNAI1. Core component of the TAS2R14-GNAT3 complex, consisting of TAS2R14, GNAT3, GNB1 and GNG2; within the complex interacts with GNAT3. Core component of the TAS2R14-GNAS2 complex, consisting of TAS2R14, GNAS2, GNB1 and GNG2; within the complex interacts with GNAS2.

The protein localises to the membrane. The catalysed reaction is Ca(2+)(in) = Ca(2+)(out). It carries out the reaction 3',5'-cyclic AMP(in) = 3',5'-cyclic AMP(out). With respect to regulation, basal activity is enhanced by binding to bitter tastants, such as flufenamic acid and aristolochic acid. Regulated by cholesterol in a concentration-dependent manner. Functionally, gustducin-linked G-protein coupled receptor that plays a role in the perception of bitterness. The activity of this receptor stimulates GNAT3, activating the gustducin G-protein pathway. Likely plays a role in sensing the chemical composition of the gastrointestinal content and other extra-oral tissues via the inhibitory G-protein pathways. In Pan troglodytes (Chimpanzee), this protein is Taste receptor type 2 member 14 (TAS2R14).